The primary structure comprises 357 residues: BLOC-1-related complex subunit 6 (357 aa).

The disordered stretch occupies residues 20–196; the sequence is HQALVFGGGP…SGAGGGRRAT (177 aa). A compositionally biased stretch (low complexity) spans 90–99; it reads GAGSRRGAPG. A compositionally biased stretch (acidic residues) spans 138-149; that stretch reads EQQEEEDNDEEA. Over residues 150-162 the composition is skewed to low complexity; that stretch reads AAGSRAGRSFSSR. Position 168 is a phosphoserine (Ser168). Thr196 carries the phosphothreonine modification. A Phosphoserine modification is found at Ser199. Positions 227 to 256 are disordered; that stretch reads LSGAPPPPPSAPARPCPAPAPTPTPAIPPI. Residues 230–256 show a composition bias toward pro residues; it reads APPPPPSAPARPCPAPAPTPTPAIPPI.

This sequence belongs to the BORCS6 family. As to quaternary structure, component of the BLOC-one-related complex (BORC) which is composed of BLOC1S1, BLOC1S2, BORCS5, BORCS6, BORCS7, BORCS8, KXD1 and SNAPIN.

It is found in the lysosome membrane. In terms of biological role, as part of the BORC complex may play a role in lysosomes movement and localization at the cell periphery. Associated with the cytosolic face of lysosomes, the BORC complex may recruit ARL8B and couple lysosomes to microtubule plus-end-directed kinesin motor. The protein is BLOC-1-related complex subunit 6 of Homo sapiens (Human).